Here is a 119-residue protein sequence, read N- to C-terminus: UPF0342 protein GTNG_0551 (119 aa).

The protein belongs to the UPF0342 family.

The polypeptide is UPF0342 protein GTNG_0551 (Geobacillus thermodenitrificans (strain NG80-2)).